Consider the following 355-residue polypeptide: IgG receptor FcRn large subunit p51 (355 aa).

A signal peptide spans 1–24; sequence MRVPRSQPWGLALLLLLLPGTLRA. The interval 25–111 is alpha-1; that stretch reads AESHRSLLYH…ALKVFGDRDS (87 aa). Residues 25–300 lie on the Extracellular side of the membrane; sequence AESHRSLLYH…LESPAKSSVP (276 aa). The segment at 112 to 201 is alpha-2; the sequence is YTLQGLLGCE…ERGRGNLEWK (90 aa). Asn-126 is a glycosylation site (N-linked (GlcNAc...) asparagine). The tract at residues 202–291 is alpha-3; that stretch reads EPPSMRLKAR…GPAQPLTVEL (90 aa). Residues 203–292 enclose the Ig-like C1-type domain; sequence PPSMRLKARP…PAQPLTVELE (90 aa). The cysteines at positions 222 and 276 are disulfide-linked. The tract at residues 293-298 is connecting peptide; that stretch reads SPAKSS. The chain crosses the membrane as a helical span at residues 301–321; that stretch reads VIGISIGFLLLMTVAAGGALL. Topologically, residues 322–355 are cytoplasmic; sequence WRRRKGLPAPWIAFRGDDIGALLPTPGLSKDAES.

Belongs to the immunoglobulin superfamily. FcRn complex consists of two subunits: p51, and p14 which is equivalent to beta-2-microglobulin. It forms an MHC class I-like heterodimer. Interacts with albumin/ALB; this interaction regulates ALB homeostasis. As to expression, expressed in liver and mammary gland of non-lactating animals. Expressed in hepatocytes and in epithelial cells of portal bile ductuli. Not expressed in the brances of portal veins or hepatic arteries. Expressed in the epithelial cells of the acini and ducti in the mammary gland with expression emphasized at the apical side. Not expressed in blood vessels of mammary gland.

The protein resides in the cell membrane. It localises to the endosome membrane. Its function is as follows. Cell surface receptor that transfers passive humoral immunity from the mother to the newborn. Binds to the Fc region of monomeric immunoglobulin gamma and mediates its selective uptake from milk. IgG in the milk is bound at the apical surface of the intestinal epithelium. The resultant FcRn-IgG complexes are transcytosed across the intestinal epithelium and IgG is released from FcRn into blood or tissue fluids. Throughout life, contributes to effective humoral immunity by recycling IgG and extending its half-life in the circulation. Mechanistically, monomeric IgG binding to FcRn in acidic endosomes of endothelial and hematopoietic cells recycles IgG to the cell surface where it is released into the circulation. In addition of IgG, regulates homeostasis of the other most abundant circulating protein albumin/ALB. This Camelus dromedarius (Dromedary) protein is IgG receptor FcRn large subunit p51.